A 707-amino-acid polypeptide reads, in one-letter code: Polyribonucleotide nucleotidyltransferase (707 aa).

Asp-488 and Asp-494 together coordinate Mg(2+). The 61-residue stretch at 555–615 (PIIKVTKIDP…ENVDNAIALI (61 aa)) folds into the KH domain. Residues 625 to 692 (GEILEGKITR…DLGRLQFKRV (68 aa)) form the S1 motif domain.

Belongs to the polyribonucleotide nucleotidyltransferase family. The cofactor is Mg(2+).

The protein resides in the cytoplasm. It catalyses the reaction RNA(n+1) + phosphate = RNA(n) + a ribonucleoside 5'-diphosphate. In terms of biological role, involved in mRNA degradation. Catalyzes the phosphorolysis of single-stranded polyribonucleotides processively in the 3'- to 5'-direction. The chain is Polyribonucleotide nucleotidyltransferase from Thermotoga neapolitana (strain ATCC 49049 / DSM 4359 / NBRC 107923 / NS-E).